The chain runs to 427 residues: Gamma-glutamyl phosphate reductase (427 aa).

It belongs to the gamma-glutamyl phosphate reductase family.

Its subcellular location is the cytoplasm. The enzyme catalyses L-glutamate 5-semialdehyde + phosphate + NADP(+) = L-glutamyl 5-phosphate + NADPH + H(+). Its pathway is amino-acid biosynthesis; L-proline biosynthesis; L-glutamate 5-semialdehyde from L-glutamate: step 2/2. In terms of biological role, catalyzes the NADPH-dependent reduction of L-glutamate 5-phosphate into L-glutamate 5-semialdehyde and phosphate. The product spontaneously undergoes cyclization to form 1-pyrroline-5-carboxylate. In Bifidobacterium adolescentis (strain ATCC 15703 / DSM 20083 / NCTC 11814 / E194a), this protein is Gamma-glutamyl phosphate reductase.